Consider the following 102-residue polypeptide: Amoebiasin-1 (102 aa).

The short motif at 27–32 (NPTTGY) is the BC loop element. The short motif at 51-61 (DQHAPGICGCG) is the DE loop element. Positions 85 to 93 (PWAPNANDR) match the FG loop motif.

This sequence belongs to the protease inhibitor I42 family. As to quaternary structure, monomer. During oxidative conditions, forms homooligomers; disulfide-linked. Interacts with cysteine protease CP2. Interacts with cysteine protease CP5. In terms of processing, during oxidative conditions, cys-39, cys-58 and cys-60 react to form intra- and inter-molecular disulfide bonds resulting in the loss of the protein inhibitory activity.

The protein resides in the cytoplasm. Its function is as follows. Cysteine protease inhibitor. Inhibits cysteine proteases CP1, CP2 and CP5. May protect the cytosol against cysteine proteases released by damaged intracellular vesicles. This is Amoebiasin-1 from Entamoeba histolytica (strain ATCC 30459 / HM-1:IMSS / ABRM).